Consider the following 189-residue polypeptide: Leucine repeat adapter protein 25 (189 aa).

At Ser28 the chain carries Phosphoserine. A disordered region spans residues 54–83; that stretch reads ELSRAARAPDGPRHAAGAANAGPAAGPRRP. The segment covering 67–83 has biased composition (low complexity); it reads HAAGAANAGPAAGPRRP. Residues 86–114 form an LRR repeat; that stretch reads LDSALAALRKEMVGLRQLDMSLLCQLWGL. Residues 141 to 175 form a disordered region; sequence DSSYPPDAGLSDDEEPPDASLPPDPPPLTVPQTHN. A compositionally biased stretch (pro residues) spans 159–169; that stretch reads ASLPPDPPPLT. Ser188 bears the Phosphoserine mark.

Belongs to the FAM89 family. Interacts with SKI. Interacts (via LRR repeat) with CDC42BPA (via AGC-kinase C-terminal domain), CDC42BPB (via AGC-kinase C-terminal domain) and LIMK1 (via LIM zinc-binding domains). Forms a tripartite complex with CDC42BPA, CDC42BPB and LIMK1.

It localises to the cytoplasm. The protein resides in the cell projection. Its subcellular location is the lamellipodium. Its function is as follows. Negatively regulates TGF-beta-induced signaling; in cooperation with SKI prevents the translocation of SMAD2 from the nucleus to the cytoplasm in response to TGF-beta. Acts as an adapter that mediates the specific recognition of LIMK1 by CDC42BPA and CDC42BPB in the lamellipodia. LRAP25-mediated CDC42BPA/CDC42BPB targeting to LIMK1 and the lamellipodium results in LIMK1 activation and the subsequent phosphorylation of CFL1 which is important for lamellipodial F-actin regulation. This chain is Leucine repeat adapter protein 25 (FAM89B), found in Homo sapiens (Human).